The chain runs to 66 residues: Alpha-bisabolene synthase (66 aa).

This sequence belongs to the terpene synthase family. Tpsd subfamily. Requires Mn(2+) as cofactor. The cofactor is K(+).

It localises to the cytoplasm. The enzyme catalyses (2E,6E)-farnesyl diphosphate = (E,R)-alpha-bisabolene + diphosphate. The protein operates within terpene metabolism; oleoresin biosynthesis. Involved in defensive oleoresin formation in conifers in response to insect attack or other injury. Involved in sesquiterpene (C15) olefins biosynthesis. This Pseudotsuga menziesii (Douglas-fir) protein is Alpha-bisabolene synthase.